We begin with the raw amino-acid sequence, 240 residues long: Histidinol dehydrogenase homolog oryD (240 aa).

Q64 and H67 together coordinate Zn(2+). E134 acts as the Proton acceptor in catalysis. 2 residues coordinate Zn(2+): D168 and H228.

This sequence belongs to the histidinol dehydrogenase family. The cofactor is Zn(2+).

The protein operates within secondary metabolite biosynthesis. Its function is as follows. Histidinol dehydrogenase homolog; part of the gene cluster that mediates the biosynthesis of oryzines, natural products with an unusual maleidride backbone. The two subunits of the fungal fatty acid synthase oryfasA and oryfasB probably form octenoic acid. This fatty acid is most likely activated by the acyl-CoA ligase oryP to give octenyl-CoA before the citrate synthase-like protein oryE catalyzes condensation with oxaloacetate to form tricarboxylic acid. The next steps of the pathways are conjectural, but a favorite possible route has been proposed, beginning with decarboxylation and concomitant dehydration by the decarboxylase oryM, followed by tautomerization, which may lead to the production of a diene intermediate. Reduction of this diene intermediate could give the known metabolite piliformic acid. On the pathway to oryzine B and oryzine A, however, hydroxylation of the diene by the alpha-ketoglutarate-dependent dioxygenase oryG and lactonisation by the lactonohydrolases oryH or oryL could give oryzine B directly. Finally, enoyl reduction by the dehydrogenase oryD would then convert oryzine B into oryzine A. The chain is Histidinol dehydrogenase homolog oryD from Aspergillus oryzae (strain ATCC 42149 / RIB 40) (Yellow koji mold).